Reading from the N-terminus, the 765-residue chain is Protein transport protein Sec23A (765 aa).

Zn(2+) contacts are provided by Cys61, Cys66, Cys85, and Cys88. The Gelsolin-like repeat unit spans residues 632–718; the sequence is PEPVLLDSSS…EHGGSQARFL (87 aa).

The protein belongs to the SEC23/SEC24 family. SEC23 subfamily. In terms of assembly, COPII is composed of at least five proteins: the Sec23/24 complex, the Sec13/31 complex and Sar1.

The protein localises to the cytoplasmic vesicle. The protein resides in the COPII-coated vesicle membrane. It localises to the endoplasmic reticulum membrane. Its subcellular location is the cytoplasm. It is found in the cytosol. Component of the coat protein complex II (COPII) which promotes the formation of transport vesicles from the endoplasmic reticulum (ER). The coat has two main functions, the physical deformation of the endoplasmic reticulum membrane into vesicles and the selection of cargo molecules for their transport to the Golgi complex. The protein is Protein transport protein Sec23A of Xenopus tropicalis (Western clawed frog).